A 310-amino-acid polypeptide reads, in one-letter code: Upstream stimulatory factor 1 (310 aa).

Positions 1-17 (MKGQQKTAETEEGTVQI) are enriched in polar residues. Disordered regions lie at residues 1–26 (MKGQ…ATGE) and 171–209 (QGGS…EVER). Over residues 190 to 209 (EAPRTTRDEKRRAQHNEVER) the composition is skewed to basic and acidic residues. Positions 199-254 (KRRAQHNEVERRRRDKINNWIVQLSKIIPDCSMESTKSGQSKGGILSKACDYIQEL) constitute a bHLH domain. Residues 271–292 (LQLDNDVLRQQVEDLKNKNLLL) form a leucine-zipper region. Lysine 306 participates in a covalent cross-link: Glycyl lysine isopeptide (Lys-Gly) (interchain with G-Cter in SUMO2).

In terms of assembly, efficient DNA binding requires dimerization with another bHLH protein. Binds DNA as a homodimer or a heterodimer (USF1/USF2). Interacts with varicella-zoster virus IE62 protein.

It localises to the nucleus. Its function is as follows. Transcription factor that binds to a symmetrical DNA sequence (E-boxes) (5'-CACGTG-3') that is found in a variety of viral and cellular promoters. The protein is Upstream stimulatory factor 1 (USF1) of Homo sapiens (Human).